The chain runs to 258 residues: 5'-nucleotidase SurE (258 aa).

4 residues coordinate a divalent metal cation: D16, D17, S47, and N99.

The protein belongs to the SurE nucleotidase family. A divalent metal cation is required as a cofactor.

It localises to the cytoplasm. The enzyme catalyses a ribonucleoside 5'-phosphate + H2O = a ribonucleoside + phosphate. Functionally, nucleotidase that shows phosphatase activity on nucleoside 5'-monophosphates. The sequence is that of 5'-nucleotidase SurE from Coxiella burnetii (strain Dugway 5J108-111).